The sequence spans 219 residues: Probable cutinase 4 (219 aa).

The first 17 residues, 1–17 (MILPSLLVASLSALAAA), serve as a signal peptide directing secretion. 2 disulfides stabilise this stretch: cysteine 41–cysteine 120 and cysteine 67–cysteine 81. An N-linked (GlcNAc...) asparagine glycan is attached at asparagine 99. Serine 131 (nucleophile) is an active-site residue. A disulfide bond links cysteine 182 and cysteine 189. Aspartate 186 is an active-site residue. The active-site Proton donor/acceptor is the histidine 199.

Belongs to the cutinase family.

The protein resides in the secreted. It catalyses the reaction cutin + H2O = cutin monomers.. Functionally, catalyzes the hydrolysis of complex carboxylic polyesters found in the cell wall of plants. Degrades cutin, a macromolecule that forms the structure of the plant cuticle. This chain is Probable cutinase 4, found in Aspergillus terreus (strain NIH 2624 / FGSC A1156).